The following is a 718-amino-acid chain: K(+)-insensitive pyrophosphate-energized proton pump (718 aa).

6 helical membrane passes run 6–26 (AVLVLVIACGVVSVLFAIWAI), 54–76 (LTRQYSTIAIVGVVVFLAAWYLL), 81–103 (AIGFLIGAVLSGVTGFIGMHVSV), 112–132 (AASLSLAGGLELAFKSGAITG), 133–153 (LLVAGLALLGVSVYYFILTVW), and 168–188 (VSLGFGASLISIFARLGGGIF). Lysine 190 lines the substrate pocket. 4 residues coordinate Mg(2+): aspartate 193, aspartate 197, asparagine 220, and aspartate 223. 6 helical membrane passes run 240-260 (AVTVVATMVLGAIFFNGSDIL), 265-285 (LYPLMICGACVITSIVGTFFV), 300-320 (GLIATGLLSIVGLAIANTLTV), 335-355 (GTNLFLCGLIGLIVTGLIVVI), 385-405 (GLAVSLESTALPAIVIVGGII), and 413-433 (LFGTAIAVTAMLGIAGMIVAL). Aspartate 441 serves as a coordination point for Mg(2+). The next 4 membrane-spanning stretches (helical) occupy residues 472-492 (AVTKGYAIGSAGLGALVLFAA), 524-544 (YVVAGLIFGGLIPYLFGGMAM), 593-613 (IIPSLLPVLAPIVVYFGVLLI), and 620-640 (AFAALGASLLGVIVNGLFVAI). Positions 650, 682, and 686 each coordinate Ca(2+). A substrate-binding site is contributed by lysine 689. A helical transmembrane segment spans residues 695 to 715 (AVNPAIKITNIVALLLLAVLA).

It belongs to the H(+)-translocating pyrophosphatase (TC 3.A.10) family. K(+)-insensitive subfamily. Homodimer. Mg(2+) is required as a cofactor.

The protein resides in the cell inner membrane. The enzyme catalyses diphosphate + H2O + H(+)(in) = 2 phosphate + 2 H(+)(out). In terms of biological role, proton pump that utilizes the energy of pyrophosphate hydrolysis as the driving force for proton movement across the membrane. Generates a proton motive force. The protein is K(+)-insensitive pyrophosphate-energized proton pump of Brucella anthropi (strain ATCC 49188 / DSM 6882 / CCUG 24695 / JCM 21032 / LMG 3331 / NBRC 15819 / NCTC 12168 / Alc 37) (Ochrobactrum anthropi).